Consider the following 126-residue polypeptide: Large ribosomal subunit protein bL12c (126 aa).

Belongs to the bacterial ribosomal protein bL12 family. In terms of assembly, homodimer. Part of the ribosomal stalk of the 50S ribosomal subunit. Forms a multimeric L10(L12)X complex, where L10 forms an elongated spine to which 2 to 4 L12 dimers bind in a sequential fashion. Binds GTP-bound translation factors.

The protein localises to the plastid. The protein resides in the cyanelle. In terms of biological role, forms part of the ribosomal stalk which helps the ribosome interact with GTP-bound translation factors. Is thus essential for accurate translation. This chain is Large ribosomal subunit protein bL12c, found in Cyanophora paradoxa.